A 230-amino-acid chain; its full sequence is ATP phosphoribosyltransferase (230 aa).

The protein belongs to the ATP phosphoribosyltransferase family. Short subfamily. Heteromultimer composed of HisG and HisZ subunits.

The protein localises to the cytoplasm. The enzyme catalyses 1-(5-phospho-beta-D-ribosyl)-ATP + diphosphate = 5-phospho-alpha-D-ribose 1-diphosphate + ATP. It participates in amino-acid biosynthesis; L-histidine biosynthesis; L-histidine from 5-phospho-alpha-D-ribose 1-diphosphate: step 1/9. Its function is as follows. Catalyzes the condensation of ATP and 5-phosphoribose 1-diphosphate to form N'-(5'-phosphoribosyl)-ATP (PR-ATP). Has a crucial role in the pathway because the rate of histidine biosynthesis seems to be controlled primarily by regulation of HisG enzymatic activity. The chain is ATP phosphoribosyltransferase (hisG) from Chelativorans sp. (strain BNC1).